A 20-amino-acid polypeptide reads, in one-letter code: Collagenolytic protease 35 kDa 2 (20 aa).

Positions 1–20 (IVGGTEVTPGEIPYQLSFQD) constitute a Peptidase S1 domain. The disordered stretch occupies residues 1–20 (IVGGTEVTPGEIPYQLSFQD).

This sequence belongs to the peptidase S1 family.

It carries out the reaction Hydrolysis of proteins, with broad specificity for peptide bonds. Native collagen is cleaved about 75% of the length of the molecule from the N-terminus. Low activity on small molecule substrates of both trypsin and chymotrypsin.. In terms of biological role, this enzyme is a serine protease capable of degrading the native triple helix of collagen. The polypeptide is Collagenolytic protease 35 kDa 2 (Chionoecetes opilio (Atlantic snow crab)).